A 206-amino-acid polypeptide reads, in one-letter code: Large ribosomal subunit protein uL13x (206 aa).

This sequence belongs to the universal ribosomal protein uL13 family.

The sequence is that of Large ribosomal subunit protein uL13x (RPL13AC) from Arabidopsis thaliana (Mouse-ear cress).